The primary structure comprises 426 residues: Egl nine homolog 1 (426 aa).

Ala-2 carries the N-acetylalanine modification. Residues 6-20 (GGPGGPSPSERDRQY) are required for nuclear export. The residue at position 12 (Ser-12) is a Phosphoserine. Zn(2+) contacts are provided by Cys-21, Cys-24, Cys-33, Cys-36, Cys-42, His-46, His-54, and Cys-58. An MYND-type; atypical zinc finger spans residues 21-58 (CELCGKMENLLRCSRCRSSFYCCKEHQRQDWKKHKLVC). Disordered regions lie at residues 65–129 (LGHG…PCRA) and 160–184 (ANLYPPSNTPGDALSPGGGLRPNGQ). The segment covering 77–87 (PAPPAAVPPPR) has biased composition (pro residues). Basic and acidic residues predominate over residues 89 to 103 (GAREPRKAAARRDNA). Residues 120–129 (PAAAASPCRA) are compositionally biased toward low complexity. Residue Ser-125 is modified to Phosphoserine. Cys-201 and Cys-208 each carry S-nitrosocysteine. Residues 241–251 (VSQKSDSSKDI) form a beta(2)beta(3) 'finger-like' loop region. A Fe2OG dioxygenase domain is found at 291–392 (KINGRTKAMV…RYAITVWYFD (102 aa)). Residue Cys-302 is modified to S-nitrosocysteine. Positions 313 and 315 each coordinate Fe cation. S-nitrosocysteine occurs at positions 323 and 326. His-374 is a binding site for Fe cation. Residue Arg-383 participates in 2-oxoglutarate binding.

In terms of assembly, monomer. Interacts with ING4; the interaction inhibits the hydroxylation of HIF alpha proteins. Interacts with PTGES3 (via PXLE motif); thereby recruiting EGLN1 to the HSP90 pathway to facilitate HIF alpha proteins hydroxylation. Interacts with LIMD1. Found in a complex composed of LIMD1, VHL, EGLN1/PHD2, ELOB and CUL2. Interacts with EPAS1. Interacts with CBFA2T3. Interacts with HIF1A. Requires Fe(2+) as cofactor. L-ascorbate is required as a cofactor. In terms of processing, S-nitrosylation inhibits the enzyme activity up to 60% under aerobic conditions. Chelation of Fe(2+) has no effect on the S-nitrosylation. It is uncertain whether nitrosylation occurs on Cys-323 or Cys-326. In terms of tissue distribution, according to PubMed:11056053, widely expressed with highest levels in skeletal muscle and heart, moderate levels in pancreas, brain (dopaminergic neurons of adult and fetal substantia nigra) and kidney, and lower levels in lung and liver. According to PubMed:12351678 widely expressed with highest levels in brain, kidney and adrenal gland. Expressed in cardiac myocytes, aortic endothelial cells and coronary artery smooth muscle. According to PubMed:12788921; expressed in adult and fetal heart, brain, liver, lung, skeletal muscle and kidney. Also expressed in placenta. Highest levels in adult heart, brain, lung and liver and fetal brain, heart spleen and skeletal muscle.

It is found in the cytoplasm. Its subcellular location is the nucleus. It catalyses the reaction L-prolyl-[hypoxia-inducible factor alpha subunit] + 2-oxoglutarate + O2 = trans-4-hydroxy-L-prolyl-[hypoxia-inducible factor alpha subunit] + succinate + CO2. Following exposure to hypoxia, activated in HeLa cells but not in cardiovascular cells. Cellular oxygen sensor that catalyzes, under normoxic conditions, the post-translational formation of 4-hydroxyproline in hypoxia-inducible factor (HIF) alpha proteins. Hydroxylates a specific proline found in each of the oxygen-dependent degradation (ODD) domains (N-terminal, NODD, and C-terminal, CODD) of HIF1A. Also hydroxylates HIF2A. Has a preference for the CODD site for both HIF1A and HIF1B. Hydroxylated HIFs are then targeted for proteasomal degradation via the von Hippel-Lindau ubiquitination complex. Under hypoxic conditions, the hydroxylation reaction is attenuated allowing HIFs to escape degradation resulting in their translocation to the nucleus, heterodimerization with HIF1B, and increased expression of hypoxy-inducible genes. EGLN1 is the most important isozyme under normoxia and, through regulating the stability of HIF1, involved in various hypoxia-influenced processes such as angiogenesis in retinal and cardiac functionality. Target proteins are preferentially recognized via a LXXLAP motif. The polypeptide is Egl nine homolog 1 (Homo sapiens (Human)).